We begin with the raw amino-acid sequence, 269 residues long: Tryptophan synthase alpha chain (269 aa).

Active-site proton acceptor residues include E49 and D60.

It belongs to the TrpA family. In terms of assembly, tetramer of two alpha and two beta chains.

It carries out the reaction (1S,2R)-1-C-(indol-3-yl)glycerol 3-phosphate + L-serine = D-glyceraldehyde 3-phosphate + L-tryptophan + H2O. The protein operates within amino-acid biosynthesis; L-tryptophan biosynthesis; L-tryptophan from chorismate: step 5/5. In terms of biological role, the alpha subunit is responsible for the aldol cleavage of indoleglycerol phosphate to indole and glyceraldehyde 3-phosphate. The sequence is that of Tryptophan synthase alpha chain from Histophilus somni (strain 2336) (Haemophilus somnus).